A 947-amino-acid chain; its full sequence is Netrin receptor unc-5 (947 aa).

In terms of domain architecture, Ig-like spans V43 to F141. Disulfide bonds link C53/C112, C160/C209, C243/C295, C247/C299, and C273/C285. The Ig-like C2-type domain maps to K139–Q226. N-linked (GlcNAc...) asparagine glycosylation occurs at N206. TSP type-1 domains lie at D230–K300 and D302–T354. W305 and W308 each carry a C-linked (Man) tryptophan glycan. A helical transmembrane segment spans residues G369 to C389. The Cytoplasmic portion of the chain corresponds to C390 to P947. Y510 is subject to Phosphotyrosine. The ZU5 domain maps to N530–E658. Residues E857–L938 enclose the Death domain.

The protein belongs to the unc-5 family. Interacts (via cytoplasmic domain) with src-1 (via SH2 domain and SH3 domain). Interacts with madd-4. Interacts with unc-129; the interaction is direct. Phosphorylated on different cytoplasmic tyrosine residues. May be phosphorylated on tyrosine residues by src-1. Tyrosine phosphorylation is unc-6-dependent. In terms of processing, glycosylated via C-mannosylation by dpy-19 at Trp-305 and Trp-308. As to expression, expressed in cell bodies and axons of the VNC motor neurons that extend axons to the dorsal midline and within the ventral nerve cord. Expressed in gonadal distal tip cells (DTC).

It localises to the cell membrane. The protein localises to the membrane raft. Its subcellular location is the cell projection. It is found in the neuron projection. Receptor for netrin (unc-6) required for axon guidance. Mediates axon repulsion of neuronal growth cones in the developing nervous system upon ligand binding. Axon migration is mediated by the secreted unc-6, which promotes attraction of neurons and axons through binding to the unc-40 receptor, while repulsion requires both unc-5 and unc-40 receptors. Involved in the ventral-dorsal and anterior-posterior migration of distal tip cells along the body, which may be mediated by Wnt receptor mom-5, ced-10/Rac, ced-12/ELMO and mig-2/RhoG. The protein is Netrin receptor unc-5 of Caenorhabditis elegans.